A 121-amino-acid chain; its full sequence is Tachykinin-3 (121 aa).

The signal sequence occupies residues 1–16; that stretch reads MRIMLLFTAILAFSLA. Positions 17–78 are excised as a propeptide; the sequence is QSFGAVCKEP…TDPKESTSPE (62 aa). Methionine amide is present on Met-90. The interval 93–121 is disordered; that stretch reads RSVQPDSPTDVNQENVPSFGILKYPPRAE. The propeptide occupies 94 to 121; that stretch reads SVQPDSPTDVNQENVPSFGILKYPPRAE. A compositionally biased stretch (polar residues) spans 96-108; that stretch reads QPDSPTDVNQENV.

The protein belongs to the tachykinin family.

Its subcellular location is the secreted. Functionally, tachykinins are active peptides which excite neurons, evoke behavioral responses, are potent vasodilators and secretagogues, and contract (directly or indirectly) many smooth muscles. Is a critical central regulator of gonadal function. The polypeptide is Tachykinin-3 (TAC3) (Homo sapiens (Human)).